The chain runs to 253 residues: Protein C1orf43 homolog (253 aa).

A helical membrane pass occupies residues 11–31 (VNVVLVMAYGSLVFVLLFIFV). A disordered region spans residues 194–213 (SGSSQRQHQSAAKDLTQSPE).

It localises to the membrane. The protein localises to the golgi apparatus. It is found in the mitochondrion. General regulator of phagocytosis. Required to uptake Gram negative bacterium by macrophages. In Bos taurus (Bovine), this protein is Protein C1orf43 homolog.